We begin with the raw amino-acid sequence, 326 residues long: Lipoyl synthase (326 aa).

[4Fe-4S] cluster is bound by residues Cys-74, Cys-79, Cys-85, Cys-100, Cys-104, Cys-107, and Ser-314. One can recognise a Radical SAM core domain in the interval 85 to 303; the sequence is CFGRGTATFM…EEEAYKMGFS (219 aa).

Belongs to the radical SAM superfamily. Lipoyl synthase family. [4Fe-4S] cluster is required as a cofactor.

The protein localises to the cytoplasm. It carries out the reaction [[Fe-S] cluster scaffold protein carrying a second [4Fe-4S](2+) cluster] + N(6)-octanoyl-L-lysyl-[protein] + 2 oxidized [2Fe-2S]-[ferredoxin] + 2 S-adenosyl-L-methionine + 4 H(+) = [[Fe-S] cluster scaffold protein] + N(6)-[(R)-dihydrolipoyl]-L-lysyl-[protein] + 4 Fe(3+) + 2 hydrogen sulfide + 2 5'-deoxyadenosine + 2 L-methionine + 2 reduced [2Fe-2S]-[ferredoxin]. Its pathway is protein modification; protein lipoylation via endogenous pathway; protein N(6)-(lipoyl)lysine from octanoyl-[acyl-carrier-protein]: step 2/2. In terms of biological role, catalyzes the radical-mediated insertion of two sulfur atoms into the C-6 and C-8 positions of the octanoyl moiety bound to the lipoyl domains of lipoate-dependent enzymes, thereby converting the octanoylated domains into lipoylated derivatives. The sequence is that of Lipoyl synthase from Acidovorax ebreus (strain TPSY) (Diaphorobacter sp. (strain TPSY)).